We begin with the raw amino-acid sequence, 446 residues long: 3',5'-cyclic-AMP phosphodiesterase 7B (446 aa).

In terms of domain architecture, PDEase spans 97–420 (LDEDYLGQAR…AQWKSLLSNQ (324 aa)). H173 (proton donor) is an active-site residue. A divalent metal cation contacts are provided by H177, H213, D214, and D323. Residues 422-446 (RRRGSGQDLAGPAPETLEQTEGATP) form a disordered region. Position 426 is a phosphoserine (S426). Phosphothreonine is present on T445.

The protein belongs to the cyclic nucleotide phosphodiesterase family. PDE7 subfamily. The cofactor is a divalent metal cation. Highly expressed in brain.

The enzyme catalyses 3',5'-cyclic AMP + H2O = AMP + H(+). The protein operates within purine metabolism; 3',5'-cyclic AMP degradation; AMP from 3',5'-cyclic AMP: step 1/1. Inhibited by dipyridamole, IBMX and SCH 51866. Insensitive to zaprinast, rolipram, and milrinone. Its function is as follows. Hydrolyzes the second messenger cAMP, which is a key regulator of many important physiological processes. May be involved in the control of cAMP-mediated neural activity and cAMP metabolism in the brain. This Mus musculus (Mouse) protein is 3',5'-cyclic-AMP phosphodiesterase 7B.